The following is a 249-amino-acid chain: MTLPLIAYAPVSQNQRVTNYEVSGDEHARIFTTEGTLSPSAMDNLIAAAYRQVFNEQQMIQSNRQIALESQFKNQQITVRDFIRGLALSDSFRRRNFEVNNNYRFVQMCIQRLLGRDVYSEEEKIAWSIVIATKGLPGFINELLNSQEYLENFGYDTVPYQRRRILPQRISGELPFARMPRYGADHREKLEAIGYFRNQAPLTYRWEWQKQPYPAGVYLAGKVVLYVGGALVSLGIIAVALSAWGIIGL.

The PBS-linker domain maps to 11-189 (VSQNQRVTNY…PRYGADHREK (179 aa)). The chain crosses the membrane as a helical span at residues 223 to 247 (VVLYVGGALVSLGIIAVALSAWGII).

This sequence belongs to the phycobilisome linker protein family. As to quaternary structure, part of a specialized phycobilisome (PBS), a structure that is usually composed of two distinct substructures: a core complex and a number of rods radiating from the core. This protein is part of a core-less PBS rod (called CpcL-PBS) with on average 5 stacked phycocyanin hexamers (PC, CpcA and CpcB). Linker CpcL connects the PC stack to the thylakoid, the hexamers are linked by 1 copy of CpcC1, 3 copies of CpcC2 and the stack is terminated by a single copy of CpcD. Ferredoxin--NADP reductase (petH) is also part of the complex. CpcL-PBS has no central core proteins (allophycocyanin ApcA, ApcB) nor phycobiliprotein ApcE.

The protein resides in the cellular thylakoid membrane. Functionally, rod linker protein, associated with phycocyanin. Linker polypeptides determine the state of aggregation and the location of the disk-shaped phycobiliprotein units within the phycobilisome and modulate their spectroscopic properties in order to mediate a directed and optimal energy transfer. Plays a role in energy transfer from the phycobilisome to photosystem I (PSI). Although able to transfer energy to both photosystems, this is predominantly a PSI antenna. The sequence is that of Photosystem I-associated linker protein CpcL from Synechocystis sp. (strain ATCC 27184 / PCC 6803 / Kazusa).